Reading from the N-terminus, the 940-residue chain is Pentatricopeptide repeat-containing protein At5g14770, mitochondrial (940 aa).

The transit peptide at 1-24 directs the protein to the mitochondrion; the sequence is MIMIRIWNNYKGKYRFFLSNCRSF. PPR repeat units lie at residues 59–93, 94–129, 130–161, 162–196, 197–231, 241–259, 260–294, 295–329, 330–364, 365–399, 400–434, 435–469, 470–504, 505–539, 540–573, 574–608, 609–643, 644–678, 679–713, 714–748, 749–783, 784–818, 819–853, and 854–891; these read YVSLFHTLFRLYLSCERLYGAARTLSAMCTFGVVP, DSRLWNSLIHQFNVNGLVHDQVSLIYSKMIACGVSP, DVFALNVLIHSFCKVGRLSFAISLLRNRVISI, DTVTYNTVISGLCEHGLADEAYQFLSEMVKMGILP, DTVSYNTLIDGFCKVGNFVRAKALVDEISELNLIT, NLHAIEEAYRDMVMSGFDP, DVVTFSSIINRLCKGGKVLEGGLLLREMEEMSVYP, NHVTYTTLVDSLFKANIYRHALALYSQMVVRGIPV, DLVVYTVLMDGLFKAGDLREAEKTFKMLLEDNQVP, NVVTYTALVDGLCKAGDLSSAEFIITQMLEKSVIP, NVVTYSSMINGYVKKGMLEEAVSLLRKMEDQNVVP, NGFTYGTVIDGLFKAGKEEMAIELSKEMRLIGVEE, NNYILDALVNHLKRIGRIKEVKGLVKDMVSKGVTL, DQINYTSLIDVFFKGGDEEAALAWAEEMQERGMPW, DVVSYNVLISGMLKFGKVGADWAYKGMREKGIEP, DIATFNIMMNSQRKQGDSEGILKLWDKMKSCGIKP, SLMSCNIVVGMLCENGKMEEAIHILNQMMLMEIHP, NLTTYRIFLDTSSKHKRADAIFKTHETLLSYGIKL, SRQVYNTLIATLCKLGMTKKAAMVMGDMEARGFIP, DTVTFNSLMHGYFVGSHVRKALSTYSVMMEAGISP, NVATYNTIIRGLSDAGLIKEVDKWLSEMKSRGMRP, DDFTYNALISGQAKIGNMKGSMTIYCEMIADGLVP, KTSTYNVLISEFANVGKMLQARELLKEMGKRGVSP, and NTSTYCTMISGLCKLCTHPDVEWNKKAMYLAEAKGLLK.

This sequence belongs to the PPR family. P subfamily.

The protein resides in the mitochondrion. The protein is Pentatricopeptide repeat-containing protein At5g14770, mitochondrial of Arabidopsis thaliana (Mouse-ear cress).